The following is a 384-amino-acid chain: 5-cytosine rRNA methyltransferase NSUN4 (384 aa).

Residues 1-25 (MAALVVRGVRDMLKRADFATVPRRQ) constitute a mitochondrion transit peptide. Gly-185, Gly-186, Lys-187, and Asp-204 together coordinate S-adenosyl-L-methionine. At Ser-206 the chain carries Phosphoserine. Residues Arg-209, Asp-237, Gly-238, and Asp-255 each contribute to the S-adenosyl-L-methionine site. The active-site Nucleophile is the Cys-310.

Belongs to the class I-like SAM-binding methyltransferase superfamily. RsmB/NOP family. As to quaternary structure, heterodimer with MTERFD2/MTERF4; this interaction seems to be required for NSUN4 recruitment to the mitochondrial large ribosomal subunit.

Its subcellular location is the mitochondrion. It catalyses the reaction a cytidine in rRNA + S-adenosyl-L-methionine = a 5-methylcytidine in rRNA + S-adenosyl-L-homocysteine + H(+). It carries out the reaction a cytidine in mRNA + S-adenosyl-L-methionine = a 5-methylcytidine in mRNA + S-adenosyl-L-homocysteine + H(+). Its function is as follows. Mitochondrial RNA cytosine C(5)-methyltransferase that methylates cytosine to 5-methylcytosine (m5C) in various RNAs, such as rRNAs, mRNAs and some long non-coding RNAs (lncRNAs). Involved in mitochondrial ribosome small subunit (SSU) maturation by catalyzing methylation of mitochondrial 12S rRNA; the function is independent of MTERFD2/MTERF4 and assembled mitochondrial ribosome large subunit (LSU). Targeted to LSU by MTERFD2/MTERF4 and probably is involved in a final step in ribosome biogenesis to ensure that SSU and LSU are assembled. In vitro can methylate 16S rRNA of the LSU; the methylation is enhanced by MTERFD/MTERF4. Also acts as a regulator of innate immunity by marking double-stranded mitochondrial RNAs(mt-dsRNAs) generated in response to stress: catalyzes m5C modification on mitochondrial RNAs, such as a mRNAs and lncRNAs, with a preference for the termini of light-strand lncRNAs, promoting their degradation and cytosolic release. Modified light-strand lncRNAs are then recognized by C1QBP reader and recruited to the mitochondrial degradosome complex, which promotes their degradation. In Bos taurus (Bovine), this protein is 5-cytosine rRNA methyltransferase NSUN4 (NSUN4).